The primary structure comprises 490 residues: Betaine aldehyde dehydrogenase (490 aa).

D93 provides a ligand contact to K(+). NAD(+) is bound at residue 150-152 (GAW). Catalysis depends on K162, which acts as the Charge relay system. 176–179 (KPSE) contributes to the NAD(+) binding site. K(+) is bound at residue V180. Residue 230 to 233 (GIAS) participates in NAD(+) binding. Position 246 (L246) interacts with K(+). The active-site Proton acceptor is the E252. G254, C286, and E387 together coordinate NAD(+). The Nucleophile role is filled by C286. Residue C286 is modified to Cysteine sulfenic acid (-SOH). Positions 457 and 460 each coordinate K(+). E464 functions as the Charge relay system in the catalytic mechanism.

This sequence belongs to the aldehyde dehydrogenase family. As to quaternary structure, dimer of dimers. It depends on K(+) as a cofactor.

It catalyses the reaction betaine aldehyde + NAD(+) + H2O = glycine betaine + NADH + 2 H(+). The protein operates within amine and polyamine biosynthesis; betaine biosynthesis via choline pathway; betaine from betaine aldehyde: step 1/1. Functionally, involved in the biosynthesis of the osmoprotectant glycine betaine. Catalyzes the irreversible oxidation of betaine aldehyde to the corresponding acid. The protein is Betaine aldehyde dehydrogenase of Pectobacterium atrosepticum (strain SCRI 1043 / ATCC BAA-672) (Erwinia carotovora subsp. atroseptica).